The following is a 293-amino-acid chain: 4-hydroxy-tetrahydrodipicolinate synthase (293 aa).

A pyruvate-binding site is contributed by Thr47. Residue Tyr136 is the Proton donor/acceptor of the active site. The active-site Schiff-base intermediate with substrate is Lys164. Ile206 is a pyruvate binding site.

Belongs to the DapA family. As to quaternary structure, homotetramer; dimer of dimers.

It localises to the cytoplasm. It catalyses the reaction L-aspartate 4-semialdehyde + pyruvate = (2S,4S)-4-hydroxy-2,3,4,5-tetrahydrodipicolinate + H2O + H(+). It participates in amino-acid biosynthesis; L-lysine biosynthesis via DAP pathway; (S)-tetrahydrodipicolinate from L-aspartate: step 3/4. Catalyzes the condensation of (S)-aspartate-beta-semialdehyde [(S)-ASA] and pyruvate to 4-hydroxy-tetrahydrodipicolinate (HTPA). The protein is 4-hydroxy-tetrahydrodipicolinate synthase of Listeria innocua serovar 6a (strain ATCC BAA-680 / CLIP 11262).